The sequence spans 454 residues: Oxygen-dependent coproporphyrinogen-III oxidase, mitochondrial (454 aa).

The transit peptide at 1–110 (MALQLGRLSS…MLPKTSGTRA (110 aa)) directs the protein to the mitochondrion. Residues 43–70 (AAGRVCRPPGPAGTEQSRGLGHGSTSRG) are disordered. Phosphoserine is present on Ser-112. The segment at 193 to 202 (VLQDGCVFEK) is important for dimerization. Ser-244 provides a ligand contact to coproporphyrinogen III. Residue His-258 is the Proton donor of the active site. 260–262 (NYR) contributes to the coproporphyrinogen III binding site. An important for dimerization region spans residues 392 to 428 (YVEFNLLYDRGTKFGLFTPGSRIESILMSLPLTARWE). N6-acetyllysine; alternate is present on Lys-404. The residue at position 404 (Lys-404) is an N6-succinyllysine; alternate. 411–413 (GSR) is a coproporphyrinogen III binding site.

The protein belongs to the aerobic coproporphyrinogen-III oxidase family. Homodimer.

The protein resides in the mitochondrion intermembrane space. It catalyses the reaction coproporphyrinogen III + O2 + 2 H(+) = protoporphyrinogen IX + 2 CO2 + 2 H2O. It functions in the pathway porphyrin-containing compound metabolism; protoporphyrin-IX biosynthesis; protoporphyrinogen-IX from coproporphyrinogen-III (O2 route): step 1/1. Its function is as follows. Catalyzes the aerobic oxidative decarboxylation of propionate groups of rings A and B of coproporphyrinogen-III to yield the vinyl groups in protoporphyrinogen-IX and participates to the sixth step in the heme biosynthetic pathway. This Homo sapiens (Human) protein is Oxygen-dependent coproporphyrinogen-III oxidase, mitochondrial.